Consider the following 58-residue polypeptide: uncharacterized protein (58 aa).

This is an uncharacterized protein from Sinorhizobium fredii (strain NBRC 101917 / NGR234).